The sequence spans 663 residues: MGTSVSNPTAILQTMQGFLRKWWSEFNLQTRLMAAATLVVSLLMSGLTFWAVNTIQEDAQLVDTRFGRDVGLLLAANVAPMIADKNLTEVARFSSRFYENTSNIRYMIYADPSGKIFFGIPYSEETVQNSLTLERRIELPQIDPHNFDQPFVRQHHTPNGDVTDVFIPLQYQGKFLGVLAIGINPNPAAVNSSNLTRDVTIAVFISIWVMVILGAVFNALTITQPIKELLLGVKNIAAGNFKQRITLPFGGELGELIVNFNEMAERLERYEAQNIEELTAEKAKLDTLVSTIADGAMLVDTNLQLLLVNPTARRLFAWENKPIIGENLLENLPPEITAQLTQPLRELAADQGSLLFSPGHGPQEEEQDKTYAPEEFRISLTQPFPRTIRLMLTQVLDQNRENLRGIVMTVQDITREVELNEAKSQFISNVSHELRTPLFNIKSFIETLSEFGEDLSEVERKEFLETANHETDRLSRLVNDVLDLSKLESSKIYQLDAVDLYQLIEQSLRSYQLNAKDKQLQLEKILDPDLPFALGNYDLLLQVMTNLIGNSFKFTKAGGKIIVRAYPLHRSNLRAEDGPGLVRVEISDTGIGIDPEDQAAIFERFYRVENRVHTLEGTGLGLSIVKNIIAKHQSQIHLVSEVGVGTTFWFDLAVYQSMLMVVG.

A run of 3 helical transmembrane segments spans residues 32-52 (LMAA…FWAV), 165-185 (VFIP…GINP), and 199-219 (VTIA…VFNA). The region spanning 220–272 (LTITQPIKELLLGVKNIAAGNFKQRITLPFGGELGELIVNFNEMAERLERYEA) is the HAMP domain. A PAS domain is found at 281–351 (EKAKLDTLVS…QPLRELAADQ (71 aa)). The Histidine kinase domain maps to 429 to 656 (NVSHELRTPL…TFWFDLAVYQ (228 aa)). His432 carries the phosphohistidine; by autocatalysis modification.

Its subcellular location is the cell membrane. It catalyses the reaction ATP + protein L-histidine = ADP + protein N-phospho-L-histidine.. This Synechocystis sp. (strain ATCC 27184 / PCC 6803 / Kazusa) protein is Drug sensory protein A (dspA).